A 457-amino-acid polypeptide reads, in one-letter code: Phosphoglucosamine mutase (457 aa).

The Phosphoserine intermediate role is filled by Ser105. Mg(2+) is bound by residues Ser105, Asp247, Asp249, and Asp251. Ser105 is subject to Phosphoserine.

This sequence belongs to the phosphohexose mutase family. The cofactor is Mg(2+). Post-translationally, activated by phosphorylation.

It carries out the reaction alpha-D-glucosamine 1-phosphate = D-glucosamine 6-phosphate. In terms of biological role, catalyzes the conversion of glucosamine-6-phosphate to glucosamine-1-phosphate. The polypeptide is Phosphoglucosamine mutase (Protochlamydia amoebophila (strain UWE25)).